A 318-amino-acid polypeptide reads, in one-letter code: UAP56-interacting factor (318 aa).

M1 is subject to N-acetylmethionine. The disordered stretch occupies residues 1-25; the sequence is MNRFGTRLVGATATSSPPPKARSNE. Position 14 is a phosphothreonine (T14). Residues S16 and S23 each carry the phosphoserine modification. Residues 26-44 carry the UAP56-binding motif motif; sequence NLDKIDMSLDDIIKLNRKE. Phosphoserine is present on S61. Residues 79-100 are disordered; the sequence is GFGKTSLNRRGRVMPGKRRPNG. The span at 85–98 shows a compositional bias: basic residues; the sequence is LNRRGRVMPGKRRP. Phosphoserine is present on S118. A Glycyl lysine isopeptide (Lys-Gly) (interchain with G-Cter in SUMO1) cross-link involves residue K140. K261 is covalently cross-linked (Glycyl lysine isopeptide (Lys-Gly) (interchain with G-Cter in SUMO2)).

This sequence belongs to the UIF family. In terms of assembly, interacts with CHTOP. Interacts with DDX39B/UAP56 and NXF1; interaction with DDX39B/UAP56 and NXF1 are mutually exclusive. Interacts with SSRP1; required for its recruitment to mRNAs. Expressed in a wide variety of cancer types.

It localises to the nucleus. It is found in the nucleoplasm. The protein localises to the nucleus speckle. Functionally, required for mRNA export from the nucleus to the cytoplasm. Acts as an adapter that uses the DDX39B/UAP56-NFX1 pathway to ensure efficient mRNA export and delivering to the nuclear pore. Associates with spliced and unspliced mRNAs simultaneously with ALYREF/THOC4. The chain is UAP56-interacting factor (FYTTD1) from Homo sapiens (Human).